Consider the following 131-residue polypeptide: Profilin-6 (131 aa).

Cysteines 13 and 115 form a disulfide. The Involved in PIP2 interaction signature appears at 81 to 97 (VVIRGKKGAGGITIKKT). At Thr-111 the chain carries Phosphothreonine.

The protein belongs to the profilin family. Occurs in many kinds of cells as a complex with monomeric actin in a 1:1 ratio. Post-translationally, phosphorylated by MAP kinases.

It is found in the cytoplasm. The protein resides in the cytoskeleton. Binds to actin and affects the structure of the cytoskeleton. At high concentrations, profilin prevents the polymerization of actin, whereas it enhances it at low concentrations. The sequence is that of Profilin-6 from Corylus avellana (European hazel).